Here is a 199-residue protein sequence, read N- to C-terminus: Large ribosomal subunit protein uL4 (199 aa).

It belongs to the universal ribosomal protein uL4 family. In terms of assembly, part of the 50S ribosomal subunit.

Its function is as follows. One of the primary rRNA binding proteins, this protein initially binds near the 5'-end of the 23S rRNA. It is important during the early stages of 50S assembly. It makes multiple contacts with different domains of the 23S rRNA in the assembled 50S subunit and ribosome. Forms part of the polypeptide exit tunnel. The protein is Large ribosomal subunit protein uL4 of Aquifex pyrophilus.